The chain runs to 141 residues: Hemoglobin subunit alpha (141 aa).

In terms of domain architecture, Globin spans 1-141 (VLSPADKTNI…VSTVLTSKYR (141 aa)). Ser-3 bears the Phosphoserine mark. At Lys-7 the chain carries N6-succinyllysine. Thr-8 carries the post-translational modification Phosphothreonine. Lys-11 carries the post-translational modification N6-succinyllysine. Lys-16 carries the post-translational modification N6-acetyllysine; alternate. At Lys-16 the chain carries N6-succinyllysine; alternate. Tyr-24 carries the post-translational modification Phosphotyrosine. Ser-35 is modified (phosphoserine). An N6-succinyllysine modification is found at Lys-40. Ser-49 is subject to Phosphoserine. O2 is bound at residue His-58. His-87 contributes to the heme b binding site. Position 102 is a phosphoserine (Ser-102). Thr-108 is subject to Phosphothreonine. Ser-124 carries the phosphoserine modification. A phosphothreonine mark is found at Thr-134 and Thr-137. Ser-138 bears the Phosphoserine mark.

The protein belongs to the globin family. As to quaternary structure, heterotetramer of two alpha chains and two beta chains. As to expression, red blood cells.

In terms of biological role, involved in oxygen transport from the lung to the various peripheral tissues. Its function is as follows. Hemopressin acts as an antagonist peptide of the cannabinoid receptor CNR1. Hemopressin-binding efficiently blocks cannabinoid receptor CNR1 and subsequent signaling. This is Hemoglobin subunit alpha (HBA) from Canis lupus familiaris (Dog).